The following is a 376-amino-acid chain: Ribosomal RNA large subunit methyltransferase G (376 aa).

Belongs to the methyltransferase superfamily. RlmG family.

The protein resides in the cytoplasm. The catalysed reaction is guanosine(1835) in 23S rRNA + S-adenosyl-L-methionine = N(2)-methylguanosine(1835) in 23S rRNA + S-adenosyl-L-homocysteine + H(+). In terms of biological role, specifically methylates the guanine in position 1835 (m2G1835) of 23S rRNA. This is Ribosomal RNA large subunit methyltransferase G from Klebsiella pneumoniae subsp. pneumoniae (strain ATCC 700721 / MGH 78578).